Reading from the N-terminus, the 232-residue chain is Large ribosomal subunit protein uL1 (232 aa).

This sequence belongs to the universal ribosomal protein uL1 family. In terms of assembly, part of the 50S ribosomal subunit.

In terms of biological role, binds directly to 23S rRNA. The L1 stalk is quite mobile in the ribosome, and is involved in E site tRNA release. Its function is as follows. Protein L1 is also a translational repressor protein, it controls the translation of the L11 operon by binding to its mRNA. In Bartonella henselae (strain ATCC 49882 / DSM 28221 / CCUG 30454 / Houston 1) (Rochalimaea henselae), this protein is Large ribosomal subunit protein uL1.